An 874-amino-acid chain; its full sequence is DNA mismatch repair protein MutS (874 aa).

Position 630-637 (630-637) interacts with ATP; the sequence is GPNMAGKS.

It belongs to the DNA mismatch repair MutS family.

In terms of biological role, this protein is involved in the repair of mismatches in DNA. It is possible that it carries out the mismatch recognition step. This protein has a weak ATPase activity. In Chlorobium phaeovibrioides (strain DSM 265 / 1930) (Prosthecochloris vibrioformis (strain DSM 265)), this protein is DNA mismatch repair protein MutS.